Consider the following 469-residue polypeptide: DNA repair and recombination protein rad22 (469 aa).

The tract at residues 265 to 296 is disordered; it reads PAANNHHSEKAGTQINNKDKGSHNSAKPVQRS. Polar residues predominate over residues 287–296; the sequence is HNSAKPVQRS. Phosphoserine is present on residues S296 and S319. Residues 429–469 are disordered; that stretch reads LHDSTTSHNKSDLMRTNSDPQSAMRSRENYDATVDKKAKKG. Residues 431 to 452 are compositionally biased toward polar residues; sequence DSTTSHNKSDLMRTNSDPQSAM. Residues 453-469 are compositionally biased toward basic and acidic residues; the sequence is RSRENYDATVDKKAKKG.

It belongs to the RAD52 family. As to quaternary structure, interacts with rhp51.

It is found in the nucleus. Its function is as follows. Active in the repair of DNA damage and in mating-type switching. Probably involved in the repair of DNA double-strands breaks. Has a role in promoting S phase completion. The chain is DNA repair and recombination protein rad22 (rad22) from Schizosaccharomyces pombe (strain 972 / ATCC 24843) (Fission yeast).